The following is a 97-amino-acid chain: Large ribosomal subunit protein bL28 (97 aa).

This sequence belongs to the bacterial ribosomal protein bL28 family.

The chain is Large ribosomal subunit protein bL28 from Bartonella henselae (strain ATCC 49882 / DSM 28221 / CCUG 30454 / Houston 1) (Rochalimaea henselae).